The primary structure comprises 231 residues: Ribose-5-phosphate isomerase A (231 aa).

Substrate is bound by residues T32–T35, D85–D88, and K98–G101. E107 acts as the Proton acceptor in catalysis. K125 is a substrate binding site.

It belongs to the ribose 5-phosphate isomerase family. As to quaternary structure, homodimer.

The catalysed reaction is aldehydo-D-ribose 5-phosphate = D-ribulose 5-phosphate. It participates in carbohydrate degradation; pentose phosphate pathway; D-ribose 5-phosphate from D-ribulose 5-phosphate (non-oxidative stage): step 1/1. Catalyzes the reversible conversion of ribose-5-phosphate to ribulose 5-phosphate. The protein is Ribose-5-phosphate isomerase A of Burkholderia orbicola (strain MC0-3).